Here is a 106-residue protein sequence, read N- to C-terminus: uncharacterized protein (106 aa).

Residues 1–27 form the signal peptide; it reads MHHFVPSISLFMASVSFSVFFSHLATS. A helical membrane pass occupies residues 42–62; the sequence is TLFSMVPLINSSFNLSVFLFF.

It is found in the membrane. This is an uncharacterized protein from Saccharomyces cerevisiae (strain ATCC 204508 / S288c) (Baker's yeast).